A 175-amino-acid polypeptide reads, in one-letter code: Nucleoside triphosphate/diphosphate phosphatase (175 aa).

The active-site Proton donor is Arg23. Asn87, Asp103, Asp105, Asp107, Asp120, and Glu123 together coordinate Mg(2+).

The protein belongs to the Ntdp family. Requires Mg(2+) as cofactor.

The enzyme catalyses a ribonucleoside 5'-triphosphate + H2O = a ribonucleoside 5'-diphosphate + phosphate + H(+). The catalysed reaction is a ribonucleoside 5'-diphosphate + H2O = a ribonucleoside 5'-phosphate + phosphate + H(+). In terms of biological role, has nucleoside phosphatase activity towards nucleoside triphosphates and nucleoside diphosphates. This Listeria innocua serovar 6a (strain ATCC BAA-680 / CLIP 11262) protein is Nucleoside triphosphate/diphosphate phosphatase.